A 219-amino-acid chain; its full sequence is UPF0173 metal-dependent hydrolase Mlab_1154 (219 aa).

This sequence belongs to the UPF0173 family.

The protein is UPF0173 metal-dependent hydrolase Mlab_1154 of Methanocorpusculum labreanum (strain ATCC 43576 / DSM 4855 / Z).